Here is a 260-residue protein sequence, read N- to C-terminus: Homeobox protein Hox-D11b (260 aa).

Low complexity predominate over residues 1–14 (MFSSSFSYPSKTSP). Disordered regions lie at residues 1–21 (MFSS…PFLA) and 151–206 (ITPG…CTRR). Residues 167-179 (RSPDGESSEERAG) are compositionally biased toward basic and acidic residues. The homeobox; truncated DNA-binding region spans 205-260 (RRKKRCPYSKQQIIELEREFLFNIYINKDRRMQLSHLLRLTDRCVNNPLNQDSFFT).

The protein belongs to the Abd-B homeobox family.

The protein localises to the nucleus. Functionally, sequence-specific transcription factor which is part of a developmental regulatory system that provides cells with specific positional identities on the anterior-posterior axis. This is Homeobox protein Hox-D11b (hoxd11b) from Takifugu rubripes (Japanese pufferfish).